A 520-amino-acid polypeptide reads, in one-letter code: 2-isopropylmalate synthase (520 aa).

Residues 5–267 (VIIFDTTLRD…YTNINHQEIY (263 aa)) enclose the Pyruvate carboxyltransferase domain. Positions 14, 202, 204, and 238 each coordinate Mn(2+). The regulatory domain stretch occupies residues 392–520 (HLDNFNIQSG…RIQQNTKEMV (129 aa)).

It belongs to the alpha-IPM synthase/homocitrate synthase family. LeuA type 1 subfamily. Homodimer. Mn(2+) serves as cofactor.

The protein resides in the cytoplasm. The catalysed reaction is 3-methyl-2-oxobutanoate + acetyl-CoA + H2O = (2S)-2-isopropylmalate + CoA + H(+). Its pathway is amino-acid biosynthesis; L-leucine biosynthesis; L-leucine from 3-methyl-2-oxobutanoate: step 1/4. In terms of biological role, catalyzes the condensation of the acetyl group of acetyl-CoA with 3-methyl-2-oxobutanoate (2-ketoisovalerate) to form 3-carboxy-3-hydroxy-4-methylpentanoate (2-isopropylmalate). This chain is 2-isopropylmalate synthase, found in Photorhabdus laumondii subsp. laumondii (strain DSM 15139 / CIP 105565 / TT01) (Photorhabdus luminescens subsp. laumondii).